Consider the following 438-residue polypeptide: Ribosomal protein uS12 methylthiotransferase RimO (438 aa).

The 117-residue stretch at His4–Arg120 folds into the MTTase N-terminal domain. [4Fe-4S] cluster is bound by residues Cys13, Cys49, Cys83, Cys144, Cys148, and Cys151. In terms of domain architecture, Radical SAM core spans Leu130–Ser359. Residues Arg362–Gln429 enclose the TRAM domain.

Belongs to the methylthiotransferase family. RimO subfamily. It depends on [4Fe-4S] cluster as a cofactor.

The protein resides in the cytoplasm. It catalyses the reaction L-aspartate(89)-[ribosomal protein uS12]-hydrogen + (sulfur carrier)-SH + AH2 + 2 S-adenosyl-L-methionine = 3-methylsulfanyl-L-aspartate(89)-[ribosomal protein uS12]-hydrogen + (sulfur carrier)-H + 5'-deoxyadenosine + L-methionine + A + S-adenosyl-L-homocysteine + 2 H(+). Catalyzes the methylthiolation of an aspartic acid residue of ribosomal protein uS12. The protein is Ribosomal protein uS12 methylthiotransferase RimO of Chlorobium chlorochromatii (strain CaD3).